The sequence spans 419 residues: Protein farnesyltransferase subunit beta (419 aa).

PFTB repeat units follow at residues 68–109 (EDNT…ITLG), 119–160 (RNKL…SVLN), 167–208 (IKNV…ILIG), 215–256 (LPRL…ALLQ), and 329–371 (SIAL…SLCQ). Residues 193-196 (HGGY) and 235-238 (RTNK) contribute to the (2E,6E)-farnesyl diphosphate site. Zn(2+) contacts are provided by Asp241 and Cys243. Residue 244–247 (YSFW) coordinates (2E,6E)-farnesyl diphosphate. Residue His359 participates in Zn(2+) binding.

The protein belongs to the protein prenyltransferase subunit beta family. Heterodimer of FTA and FTB. Zn(2+) serves as cofactor.

It catalyses the reaction L-cysteinyl-[protein] + (2E,6E)-farnesyl diphosphate = S-(2E,6E)-farnesyl-L-cysteinyl-[protein] + diphosphate. Its function is as follows. Catalyzes the transfer of a farnesyl moiety from farnesyl diphosphate to a cysteine at the fourth position from the C-terminus of several proteins. The beta subunit FTB is responsible for peptide-binding. This Pisum sativum (Garden pea) protein is Protein farnesyltransferase subunit beta (FTB).